We begin with the raw amino-acid sequence, 430 residues long: 3-phosphoshikimate 1-carboxyvinyltransferase (430 aa).

The 3-phosphoshikimate site is built by Lys-21, Ser-22, and Arg-26. Lys-21 lines the phosphoenolpyruvate pocket. Residues Gly-95 and Arg-123 each coordinate phosphoenolpyruvate. The 3-phosphoshikimate site is built by Thr-167, Gln-169, Asp-315, and Lys-342. Gln-169 lines the phosphoenolpyruvate pocket. Asp-315 acts as the Proton acceptor in catalysis. Phosphoenolpyruvate contacts are provided by Arg-346 and Arg-390.

It belongs to the EPSP synthase family. In terms of assembly, monomer.

The protein localises to the cytoplasm. The catalysed reaction is 3-phosphoshikimate + phosphoenolpyruvate = 5-O-(1-carboxyvinyl)-3-phosphoshikimate + phosphate. It participates in metabolic intermediate biosynthesis; chorismate biosynthesis; chorismate from D-erythrose 4-phosphate and phosphoenolpyruvate: step 6/7. Its function is as follows. Catalyzes the transfer of the enolpyruvyl moiety of phosphoenolpyruvate (PEP) to the 5-hydroxyl of shikimate-3-phosphate (S3P) to produce enolpyruvyl shikimate-3-phosphate and inorganic phosphate. In Endomicrobium trichonymphae, this protein is 3-phosphoshikimate 1-carboxyvinyltransferase.